We begin with the raw amino-acid sequence, 129 residues long: MTTDVIADMLTRIRNANQRMLKTVNIPSSKMKLEIANILKEEGFISSFTVEGEVKKTITIELKYQGKQRVISGLKKISKPGLRVYAPANEIPQVLNGLGIAIVSTSQGIMTGKQARLSNIGGEVLAFVW.

The protein belongs to the universal ribosomal protein uS8 family. In terms of assembly, part of the 30S ribosomal subunit. Contacts proteins S5 and S12.

In terms of biological role, one of the primary rRNA binding proteins, it binds directly to 16S rRNA central domain where it helps coordinate assembly of the platform of the 30S subunit. In Mesoplasma florum (strain ATCC 33453 / NBRC 100688 / NCTC 11704 / L1) (Acholeplasma florum), this protein is Small ribosomal subunit protein uS8.